The sequence spans 204 residues: CLAVATA3/ESR (CLE)-related protein 1 (204 aa).

The first 21 residues, 1–21, serve as a signal peptide directing secretion; that stretch reads MAKNAMLCLLILSVVLALAFA. Positions 21 to 83 are required for secretion from the host cytoplasm to the host apoplasm; sequence ATNEKDDKEA…SNQLQNAYRM (63 aa). An N-linked (GlcNAc...) asparagine glycan is attached at asparagine 32. The interval 116–204 is disordered; that stretch reads RNTGMKPQSY…TPGVPDRQHR (89 aa). Basic and acidic residues-rich tracts occupy residues 139-151, 160-172, and 181-193; these read LHNR…EQKR. 3 consecutive propeptides (removed in mature form) follow at residues 142–150, 163–171, and 184–192; these read REKILEEQK and REKTLEEQK.

It belongs to the CLV3/ESR signal peptide family. In terms of processing, preprocessing of the precursor by host proteases leads first to the production of 21-mer CLE-containing peptides (Arg-130 to Lys-150, Arg-151 to Lys-171 and Arg-172 to Lys-192) followed by an ultimate C-term trimming to give the mature 12-mer CLE1-1 peptide. As to expression, highly expressed exclusively within the dorsal esophageal gland cell during syncytium formation in host plants.

Its subcellular location is the secreted. The protein resides in the host cytoplasm. It is found in the host extracellular space. The protein localises to the extracellular space. It localises to the apoplast. Mimics host plant CLE extracellular signal peptides that regulate cell fate. May play a role in the differentiation or division of feeding cells (syncytia) induced in plant roots during infection. The polypeptide is CLAVATA3/ESR (CLE)-related protein 1 (Globodera rostochiensis (Golden nematode worm)).